The chain runs to 130 residues: Small ribosomal subunit protein uS11c (130 aa).

Belongs to the universal ribosomal protein uS11 family. As to quaternary structure, part of the 30S ribosomal subunit.

The protein resides in the plastid. It is found in the chloroplast. In Pinus koraiensis (Korean pine), this protein is Small ribosomal subunit protein uS11c.